The chain runs to 348 residues: Holliday junction branch migration complex subunit RuvB (348 aa).

The tract at residues 1–20 (MKPPARMVSPERRSDDVGDT) is disordered. A large ATPase domain (RuvB-L) region spans residues 1-183 (MKPPARMVSP…FGIPIRLNFY (183 aa)). ATP is bound by residues leucine 22, arginine 23, glycine 64, lysine 67, threonine 68, threonine 69, 130–132 (EDF), arginine 173, tyrosine 183, and arginine 220. A Mg(2+)-binding site is contributed by threonine 68. Residues 184–254 (TVEELEGIVT…IADHALSALE (71 aa)) form a small ATPAse domain (RuvB-S) region. The interval 257–348 (AAGLDAMDRR…FGLFGSEDDA (92 aa)) is head domain (RuvB-H). Arginine 293, arginine 312, and arginine 317 together coordinate DNA.

This sequence belongs to the RuvB family. As to quaternary structure, homohexamer. Forms an RuvA(8)-RuvB(12)-Holliday junction (HJ) complex. HJ DNA is sandwiched between 2 RuvA tetramers; dsDNA enters through RuvA and exits via RuvB. An RuvB hexamer assembles on each DNA strand where it exits the tetramer. Each RuvB hexamer is contacted by two RuvA subunits (via domain III) on 2 adjacent RuvB subunits; this complex drives branch migration. In the full resolvosome a probable DNA-RuvA(4)-RuvB(12)-RuvC(2) complex forms which resolves the HJ.

The protein resides in the cytoplasm. It carries out the reaction ATP + H2O = ADP + phosphate + H(+). Its function is as follows. The RuvA-RuvB-RuvC complex processes Holliday junction (HJ) DNA during genetic recombination and DNA repair, while the RuvA-RuvB complex plays an important role in the rescue of blocked DNA replication forks via replication fork reversal (RFR). RuvA specifically binds to HJ cruciform DNA, conferring on it an open structure. The RuvB hexamer acts as an ATP-dependent pump, pulling dsDNA into and through the RuvAB complex. RuvB forms 2 homohexamers on either side of HJ DNA bound by 1 or 2 RuvA tetramers; 4 subunits per hexamer contact DNA at a time. Coordinated motions by a converter formed by DNA-disengaged RuvB subunits stimulates ATP hydrolysis and nucleotide exchange. Immobilization of the converter enables RuvB to convert the ATP-contained energy into a lever motion, pulling 2 nucleotides of DNA out of the RuvA tetramer per ATP hydrolyzed, thus driving DNA branch migration. The RuvB motors rotate together with the DNA substrate, which together with the progressing nucleotide cycle form the mechanistic basis for DNA recombination by continuous HJ branch migration. Branch migration allows RuvC to scan DNA until it finds its consensus sequence, where it cleaves and resolves cruciform DNA. The chain is Holliday junction branch migration complex subunit RuvB from Bradyrhizobium sp. (strain BTAi1 / ATCC BAA-1182).